The chain runs to 321 residues: Phospho-N-acetylmuramoyl-pentapeptide-transferase (321 aa).

10 consecutive transmembrane segments (helical) span residues 6–26 (IFIPIVVSFAITVSVMPLFIG), 54–74 (MGGVVFLVASLITSLAMGLFF), 77–97 (FTPSLLIILFILVLYGLLGYL), 117–137 (LIGQIFGGLVFYFVYRSEGFS), 143–163 (FGVAEVPLGIFYGVFIIFWLV), 175–195 (IDGLVAGLGTISFGTYAIIAW), 200–220 (FDVVIICLSVIGGLIGFFPYN), 226–246 (IFMGDVGSLALGGLLAAISII), 251–271 (WTLLLIGLVYVCETASVILQV), and 301–321 (IDFVFWSVGLICSGITLWILF).

It belongs to the glycosyltransferase 4 family. MraY subfamily. Requires Mg(2+) as cofactor.

It localises to the cell membrane. The catalysed reaction is UDP-N-acetyl-alpha-D-muramoyl-L-alanyl-gamma-D-glutamyl-L-lysyl-D-alanyl-D-alanine + di-trans,octa-cis-undecaprenyl phosphate = Mur2Ac(oyl-L-Ala-gamma-D-Glu-L-Lys-D-Ala-D-Ala)-di-trans,octa-cis-undecaprenyl diphosphate + UMP. It participates in cell wall biogenesis; peptidoglycan biosynthesis. Its function is as follows. Catalyzes the initial step of the lipid cycle reactions in the biosynthesis of the cell wall peptidoglycan: transfers peptidoglycan precursor phospho-MurNAc-pentapeptide from UDP-MurNAc-pentapeptide onto the lipid carrier undecaprenyl phosphate, yielding undecaprenyl-pyrophosphoryl-MurNAc-pentapeptide, known as lipid I. This Enterococcus faecalis (strain ATCC 700802 / V583) protein is Phospho-N-acetylmuramoyl-pentapeptide-transferase.